The chain runs to 80 residues: Large ribosomal subunit protein uL29 (80 aa).

Belongs to the universal ribosomal protein uL29 family.

This is Large ribosomal subunit protein uL29 (rpmC) from Mycobacterium leprae (strain TN).